We begin with the raw amino-acid sequence, 380 residues long: Sterol 24-C-methyltransferase ERG6B (380 aa).

This sequence belongs to the class I-like SAM-binding methyltransferase superfamily. Erg6/SMT family.

The enzyme catalyses lanosterol + S-adenosyl-L-methionine = eburicol + S-adenosyl-L-homocysteine + H(+). The protein operates within steroid metabolism; ergosterol biosynthesis. Sterol 24-C-methyltransferase; part of the third module of ergosterol biosynthesis pathway that includes the late steps of the pathway. ERG6A and ERG6B methylate lanosterol at C-24 to produce eburicol. The third module or late pathway involves the ergosterol synthesis itself through consecutive reactions that mainly occur in the endoplasmic reticulum (ER) membrane. Firstly, the squalene synthase ERG9 catalyzes the condensation of 2 farnesyl pyrophosphate moieties to form squalene, which is the precursor of all steroids. Squalene synthase is crucial for balancing the incorporation of farnesyl diphosphate (FPP) into sterol and nonsterol isoprene synthesis. Secondly, squalene is converted into lanosterol by the consecutive action of the squalene epoxidase ERG1 and the lanosterol synthase ERG7. Then, the delta(24)-sterol C-methyltransferase ERG6 methylates lanosterol at C-24 to produce eburicol. Eburicol is the substrate of the sterol 14-alpha demethylase encoded by CYP51A, CYP51B and CYP51C, to yield 4,4,24-trimethyl ergosta-8,14,24(28)-trienol. CYP51B encodes the enzyme primarily responsible for sterol 14-alpha-demethylation, and plays an essential role in ascospore formation. CYP51A encodes an additional sterol 14-alpha-demethylase, induced on ergosterol depletion and responsible for the intrinsic variation in azole sensitivity. The third CYP51 isoform, CYP51C, does not encode a sterol 14-alpha-demethylase, but is required for full virulence on host wheat ears. The C-14 reductase ERG24 then reduces the C14=C15 double bond which leads to 4,4-dimethylfecosterol. A sequence of further demethylations at C-4, involving the C-4 demethylation complex containing the C-4 methylsterol oxidases ERG25, the sterol-4-alpha-carboxylate 3-dehydrogenase ERG26 and the 3-keto-steroid reductase ERG27, leads to the production of fecosterol via 4-methylfecosterol. ERG28 has a role as a scaffold to help anchor ERG25, ERG26 and ERG27 to the endoplasmic reticulum. The C-8 sterol isomerase ERG2 then catalyzes the reaction which results in unsaturation at C-7 in the B ring of sterols and thus converts fecosterol to episterol. The sterol-C5-desaturases ERG3A and ERG3BB then catalyze the introduction of a C-5 double bond in the B ring to produce 5-dehydroepisterol. The C-22 sterol desaturases ERG5A and ERG5B further convert 5-dehydroepisterol into ergosta-5,7,22,24(28)-tetraen-3beta-ol by forming the C-22(23) double bond in the sterol side chain. Finally, ergosta-5,7,22,24(28)-tetraen-3beta-ol is substrate of the C-24(28) sterol reductase ERG4 to produce ergosterol. This Gibberella zeae (strain ATCC MYA-4620 / CBS 123657 / FGSC 9075 / NRRL 31084 / PH-1) (Wheat head blight fungus) protein is Sterol 24-C-methyltransferase ERG6B.